Here is a 379-residue protein sequence, read N- to C-terminus: NADH-quinone oxidoreductase subunit D 2 (379 aa).

This sequence belongs to the complex I 49 kDa subunit family. As to quaternary structure, NDH-1 is composed of 14 different subunits. Subunits NuoB, C, D, E, F, and G constitute the peripheral sector of the complex.

The protein localises to the cell inner membrane. It carries out the reaction a quinone + NADH + 5 H(+)(in) = a quinol + NAD(+) + 4 H(+)(out). Its function is as follows. NDH-1 shuttles electrons from NADH, via FMN and iron-sulfur (Fe-S) centers, to quinones in the respiratory chain. The immediate electron acceptor for the enzyme in this species is believed to be ubiquinone. Couples the redox reaction to proton translocation (for every two electrons transferred, four hydrogen ions are translocated across the cytoplasmic membrane), and thus conserves the redox energy in a proton gradient. This chain is NADH-quinone oxidoreductase subunit D 2, found in Anaeromyxobacter dehalogenans (strain 2CP-C).